We begin with the raw amino-acid sequence, 319 residues long: uncharacterized protein (319 aa).

Positions 268–312 (SSVVAVTHPPSTTSTTTSVSETLSSFIAPSDLSSQPSPSSHPSSP) are enriched in low complexity. The tract at residues 268–319 (SSVVAVTHPPSTTSTTTSVSETLSSFIAPSDLSSQPSPSSHPSSPFGNHNEF) is disordered.

This is an uncharacterized protein from Lepidoptera (butterflies and moths).